We begin with the raw amino-acid sequence, 340 residues long: uncharacterized protein (340 aa).

The signal sequence occupies residues 1–20; that stretch reads MGGARRLKLDGSIPNQLARA.

This is an uncharacterized protein from Mycobacterium tuberculosis (strain CDC 1551 / Oshkosh).